Consider the following 126-residue polypeptide: NADH-quinone oxidoreductase subunit A (126 aa).

3 helical membrane-spanning segments follow: residues 14 to 34, 66 to 86, and 96 to 116; these read FLYF…TSWF, FYLI…LYAW, and IGFV…FYLV.

The protein belongs to the complex I subunit 3 family. In terms of assembly, NDH-1 is composed of 13 different subunits. Subunits NuoA, H, J, K, L, M, N constitute the membrane sector of the complex.

The protein localises to the cell membrane. It carries out the reaction a quinone + NADH + 5 H(+)(in) = a quinol + NAD(+) + 4 H(+)(out). Functionally, NDH-1 shuttles electrons from NADH, via FMN and iron-sulfur (Fe-S) centers, to quinones in the respiratory chain. The immediate electron acceptor for the enzyme in this species is believed to be ubiquinone. Couples the redox reaction to proton translocation (for every two electrons transferred, four hydrogen ions are translocated across the cytoplasmic membrane), and thus conserves the redox energy in a proton gradient. This Buchnera aphidicola subsp. Schizaphis graminum (strain Sg) protein is NADH-quinone oxidoreductase subunit A.